A 213-amino-acid polypeptide reads, in one-letter code: Thymidylate kinase (213 aa).

Residue 10-17 (GLEGAGKT) participates in ATP binding.

The protein belongs to the thymidylate kinase family.

The catalysed reaction is dTMP + ATP = dTDP + ADP. Its function is as follows. Phosphorylation of dTMP to form dTDP in both de novo and salvage pathways of dTTP synthesis. The protein is Thymidylate kinase of Escherichia coli O6:H1 (strain CFT073 / ATCC 700928 / UPEC).